The following is a 126-amino-acid chain: RxLR effector protein BLR31 (126 aa).

The N-terminal stretch at 1–22 (MLLSRAISVLALLACIRCGVHA) is a signal peptide. Positions 44-58 (RLLRTSVDFKDSEER) match the RxLR-dEER motif.

It belongs to the RxLR effector family.

It is found in the secreted. It localises to the host cell. Its function is as follows. Secreted effector that triggers a hypersensitive response (HR) in 3 Lactuca saligna accessions (CGN05947, CGN05310, CGN05304). This is RxLR effector protein BLR31 from Bremia lactucae (Lettuce downy mildew).